The chain runs to 190 residues: Holliday junction branch migration complex subunit RuvA (190 aa).

The segment at 1–64 (MIGKLSGTLD…EDAQILYGFA (64 aa)) is domain I. The segment at 65–137 (TSQERAAFRE…LKGKLGPDIG (73 aa)) is domain II. Residues 137 to 141 (GVAAS) are flexible linker. Residues 142-190 (VANDSQADILQALLALGYSDKEAAAALKALPSDVGVSEGIRLALRALGK) are domain III.

Belongs to the RuvA family. As to quaternary structure, homotetramer. Forms an RuvA(8)-RuvB(12)-Holliday junction (HJ) complex. HJ DNA is sandwiched between 2 RuvA tetramers; dsDNA enters through RuvA and exits via RuvB. An RuvB hexamer assembles on each DNA strand where it exits the tetramer. Each RuvB hexamer is contacted by two RuvA subunits (via domain III) on 2 adjacent RuvB subunits; this complex drives branch migration. In the full resolvosome a probable DNA-RuvA(4)-RuvB(12)-RuvC(2) complex forms which resolves the HJ.

It is found in the cytoplasm. Its function is as follows. The RuvA-RuvB-RuvC complex processes Holliday junction (HJ) DNA during genetic recombination and DNA repair, while the RuvA-RuvB complex plays an important role in the rescue of blocked DNA replication forks via replication fork reversal (RFR). RuvA specifically binds to HJ cruciform DNA, conferring on it an open structure. The RuvB hexamer acts as an ATP-dependent pump, pulling dsDNA into and through the RuvAB complex. HJ branch migration allows RuvC to scan DNA until it finds its consensus sequence, where it cleaves and resolves the cruciform DNA. This chain is Holliday junction branch migration complex subunit RuvA, found in Albidiferax ferrireducens (strain ATCC BAA-621 / DSM 15236 / T118) (Rhodoferax ferrireducens).